The following is a 538-amino-acid chain: Calcium-dependent protein kinase 3 (538 aa).

Positions 23–70 (PKKSIERIKKKKDSNKSIKSQHKFEGSKISNKNNELKDVKSKDPKNYE) are disordered. Residues 56 to 68 (NELKDVKSKDPKN) show a composition bias toward basic and acidic residues. Residues 112–367 (NLSEEPLGKG…ASEALKHPWF (256 aa)) form the Protein kinase domain. Residues 118 to 126 (LGKGTYGCV) and Lys141 each bind ATP. Asp232 (proton acceptor) is an active-site residue. A J domain autoinhibitory motif motif is present at residues 387–395 (NFKNYALLL). Residues 387–422 (NFKNYALLLKLQKLAMTIIAQQSNDYDLQQLKAVFL) are j domain. The short motif at 396-405 (KLQKLAMTII) is the J domain EF-hand interaction motif element. EF-hand domains follow at residues 412-447 (YDLQ…SGLK), 450-481 (QNFD…DRKH), and 482-517 (LSKK…VILF). Residues Asp460, Asp462, Ser464, Arg466, Glu471, Asp495, Asp497, Asp499, Glu501, and Glu506 each coordinate Ca(2+).

This sequence belongs to the protein kinase superfamily. Ser/Thr protein kinase family. CDPK subfamily. The cofactor is Mg(2+).

It localises to the cytoplasm. The catalysed reaction is L-seryl-[protein] + ATP = O-phospho-L-seryl-[protein] + ADP + H(+). The enzyme catalyses L-threonyl-[protein] + ATP = O-phospho-L-threonyl-[protein] + ADP + H(+). Its activity is regulated as follows. Activated by calcium. Upon calcium binding to the EF-hand domain 2, the C-terminus of the junction domain (J domain) undergoes a conformational change which results in the dissociation of the pseudo-substrate inhibitory motif from the catalytic domain. This, in turn, may facilitate the autophosphorylation of the activation loop at Thr-273, which leads to the kinase activation. Its function is as follows. Calcium-dependent protein kinase which acts as a sensor and effector of intracellular Ca(2+) levels probably in part downstream of cGMP-activated PKG kinase. In the mosquito midgut, regulates the gliding motility of the ookinete which is essential for the ookinete to invade the midgut epithelium. However, another study showed that while required for ookinete invasion of the midgut epithelium, is not required for ookinete gliding motility. In Plasmodium yoelii yoelii, this protein is Calcium-dependent protein kinase 3.